The sequence spans 225 residues: MKVFVVLAAIVAIANGLTSGSGVTTRYWDCCKPSCSWGGKASVTKPVRTCKANGNTTIDSNTQSGCNGGSSYVCNDQQPFTQGNVGYGFAAASISGQPESQTCCACYEMTFTNTAISGQKMIVQVTNTGSDLNGNHFDLMIPGGGVGIFNGCQSQWGAPSNGWGQRYGGISSQSECNQLPTSLRAGCNWRFGWFKNADNPSMKFTQVRCPTILTQKSQCVRTPGP.

Residues 1–15 form the signal peptide; sequence MKVFVVLAAIVAIAN. The active-site Nucleophile is aspartate 29. 7 disulfide bridges follow: cysteine 30–cysteine 152, cysteine 31–cysteine 66, cysteine 35–cysteine 103, cysteine 50–cysteine 74, cysteine 104–cysteine 219, cysteine 106–cysteine 209, and cysteine 176–cysteine 187. N-linked (GlcNAc...) asparagine glycosylation is present at asparagine 55. Residue aspartate 138 is the Proton donor of the active site.

Belongs to the glycosyl hydrolase 45 (cellulase K) family. Post-translationally, N- and O-glycosylated. Contains hybrid- and complex-type N-glycans.

It is found in the secreted. The catalysed reaction is Endohydrolysis of (1-&gt;4)-beta-D-glucosidic linkages in cellulose, lichenin and cereal beta-D-glucans.. Activity is not affected by metal ions except Mn(2+), which reduces the activity by 40-50%. However, no significant change in activity in response to 1 mM EDTA. In terms of biological role, hydrolyzes carboxymethylcellulose (CMC). Also hydrolyzes lichenan and barley beta-1,4-D-glucan. CMC is hydrolyzed majorily to cellobiose (G2), cellotriose (G3) and cellotetraose (G4). Cellohexaose (G6) is hydrolyzed to G4 and G2 with traces of G3. Cellopentaose (G5) is completely hydrolyzed to G2 and G3, and G4 is partially hydrolyzed to G2. Does not hydrolyze G2 or G3. Does not hydrolyze crystalline cellulose, soluble starch, xylan, mannan or laminarin. The chain is Endoglucanase from Cryptopygus antarcticus (Antarctic springtail).